Here is a 168-residue protein sequence, read N- to C-terminus: Replicase polyprotein 1ab (168 aa).

One can recognise a Nidovirus-type SAM-dependent 2'-O-MTase domain in the interval 1-165; the sequence is PNTKSIDGEN…KLLNFGNHLV (165 aa).

In terms of biological role, the replicase polyprotein of coronaviruses is a multifunctional protein: it contains the activities necessary for the transcription of negative stranded RNA, leader RNA, subgenomic mRNAs and progeny virion RNA as well as proteinases responsible for the cleavage of the polyprotein into functional products. The protein is Replicase polyprotein 1ab (rep) of Canine coronavirus (strain Insavc-1) (CCoV).